The following is a 394-amino-acid chain: Guanine nucleotide-binding protein G(s) subunit alpha isoforms short (394 aa).

The disordered stretch occupies residues 1-23 (MGCLGNSKTEDQRNEEKAQREAN). Gly2 carries N-palmitoyl glycine lipidation. Cys3 is lipidated: S-palmitoyl cysteine. Residues 8–23 (KTEDQRNEEKAQREAN) show a composition bias toward basic and acidic residues. One can recognise a G-alpha domain in the interval 39–394 (ATHRLLLLGA…RMHLRQYELL (356 aa)). The G1 motif stretch occupies residues 42-55 (RLLLLGAGESGKST). 47-55 (GAGESGKST) provides a ligand contact to GTP. Residue Ser54 participates in Mg(2+) binding. The disordered stretch occupies residues 68–90 (FNGEGGEEDPQAARSNSDGEKAT). The G2 motif stretch occupies residues 196–204 (DLLRCRVLT). GTP is bound by residues 197-204 (LLRCRVLT), 223-227 (DVGGQ), and 292-295 (NKQD). Thr204 is a binding site for Mg(2+). Residues 219–228 (FHMFDVGGQR) are G3 motif. Residues 288–295 (ILFLNKQD) form a G4 motif region. Lys300 is covalently cross-linked (Glycyl lysine isopeptide (Lys-Gly) (interchain with G-Cter in ubiquitin)). The residue at position 352 (Ser352) is a Phosphoserine. A G5 motif region spans residues 364–369 (TCAVDT). A GTP-binding site is contributed by Ala366.

This sequence belongs to the G-alpha family. G(s) subfamily. In terms of assembly, heterotrimeric G proteins are composed of 3 units; alpha, beta and gamma. The alpha chain contains the guanine nucleotide binding site. Component of the TAS2R14-GNAS2 complex, consisting of TAS2R14, GNAS2, GNB1 and GNG2; within the complex interacts with TAS2R14; this complex plays a role in the perception of bitterness. Interacts with CRY1; the interaction may block GPCR-mediated regulation of cAMP concentrations. Interacts with ADCY6 and stimulates its adenylyl cyclase activity. Interacts with ADCY2 and ADCY5. Interacts (GDP-bound form) with RIC8B; promoting GNAS folding and association with the plasma membrane. Stimulates the ADCY5 adenylyl cyclase activity. Interaction with SASH1. Interacts with GASL2L2.

It localises to the cell membrane. It carries out the reaction GTP + H2O = GDP + phosphate + H(+). In terms of biological role, guanine nucleotide-binding proteins (G proteins) function as transducers in numerous signaling pathways controlled by G protein-coupled receptors (GPCRs). The alpha chain contains the guanine nucleotide binding site and alternates between an active, GTP-bound state and an inactive, GDP-bound state. Signaling by an activated GPCR promotes GDP release and GTP binding. The alpha subunit has a low GTPase activity that converts bound GTP to GDP, thereby terminating the signal. Both GDP release and GTP hydrolysis are modulated by numerous regulatory proteins. Signaling involves the activation of adenylyl cyclases, resulting in increased levels of the signaling molecule cAMP. Functions downstream of beta-adrenergic receptors. Stimulates the Ras signaling pathway via RAPGEF2. In Mus musculus (Mouse), this protein is Guanine nucleotide-binding protein G(s) subunit alpha isoforms short (Gnas).